A 508-amino-acid polypeptide reads, in one-letter code: UTP--glucose-1-phosphate uridylyltransferase (508 aa).

Ser-13 bears the Phosphoserine mark. UTP contacts are provided by residues 113 to 116 (LNGG), Lys-127, Gln-190, and Gly-222. 115–116 (GG) is a binding site for substrate. Lys-127 contributes to the Mg(2+) binding site. Residues His-223 and 251–253 (NID) each bind substrate. Asp-253 and Lys-396 together coordinate UTP. Asp-253 contacts Mg(2+). Lys-396 is an active-site residue. Thr-426 carries the phosphothreonine modification. A Phosphoserine modification is found at Ser-434. An N6-acetyllysine modification is found at Lys-438. 2 positions are modified to phosphoserine: Ser-448 and Ser-461. The oligomerization stretch occupies residues 457–508 (HLTVSGDVTFGKNVSLKGTVIIIANHGDRIDIPPGAVLENKIVSGNLRILDH). Positions 502–503 (NL) are critical for end-to-end subunit interaction.

This sequence belongs to the UDPGP type 1 family. Homooctamer.

The protein resides in the cytoplasm. The catalysed reaction is alpha-D-glucose 1-phosphate + UTP + H(+) = UDP-alpha-D-glucose + diphosphate. It participates in glycan biosynthesis; glycogen biosynthesis. Functionally, UTP--glucose-1-phosphate uridylyltransferase catalyzing the conversion of glucose-1-phosphate into UDP-glucose, a crucial precursor for the production of glycogen. This chain is UTP--glucose-1-phosphate uridylyltransferase (Ugp2), found in Mus musculus (Mouse).